Here is a 518-residue protein sequence, read N- to C-terminus: Uronate isomerase (518 aa).

This sequence belongs to the metallo-dependent hydrolases superfamily. Uronate isomerase family.

It catalyses the reaction D-glucuronate = D-fructuronate. The enzyme catalyses aldehydo-D-galacturonate = keto-D-tagaturonate. It functions in the pathway carbohydrate metabolism; pentose and glucuronate interconversion. The chain is Uronate isomerase (uxaC) from Corynebacterium glutamicum (strain ATCC 13032 / DSM 20300 / JCM 1318 / BCRC 11384 / CCUG 27702 / LMG 3730 / NBRC 12168 / NCIMB 10025 / NRRL B-2784 / 534).